We begin with the raw amino-acid sequence, 258 residues long: Indole-3-glycerol phosphate synthase (258 aa).

This sequence belongs to the TrpC family.

The enzyme catalyses 1-(2-carboxyphenylamino)-1-deoxy-D-ribulose 5-phosphate + H(+) = (1S,2R)-1-C-(indol-3-yl)glycerol 3-phosphate + CO2 + H2O. It participates in amino-acid biosynthesis; L-tryptophan biosynthesis; L-tryptophan from chorismate: step 4/5. This chain is Indole-3-glycerol phosphate synthase, found in Campylobacter jejuni (strain RM1221).